We begin with the raw amino-acid sequence, 1088 residues long: Serine/threonine-protein kinase LATS2 (1088 aa).

Residues 24-49 (EGLKQPSKSSVQGLPAGPNSDTSLDA) are disordered. A Phosphoserine; by AURKA modification is found at Ser-83. Positions 98–139 (EVNRQMLQELVNAGCDQEMAGRALKQTGSRSIEAALEYISKM) constitute a UBA domain. Residues 101 to 141 (RQMLQELVNAGCDQEMAGRALKQTGSRSIEAALEYISKMGY) are interaction with ubiquitinated AMOTL2. Over residues 271-280 (RSPSFQSKTP) the composition is skewed to polar residues. The tract at residues 271 to 323 (RSPSFQSKTPPETGGYASLPTKGQGGPPGAGLAFPPPAAGLYVPHPHHKQAGP) is disordered. Thr-279 bears the Phosphothreonine mark. Ser-380 carries the phosphoserine modification. 2 disordered regions span residues 383-428 (KPGL…SLPA) and 454-483 (PQTA…AAEG). Polar residues predominate over residues 404–413 (SRTNSFNSHQ). Pro residues predominate over residues 466-478 (VPAPAPAPAPAPA). The PPxY motif motif lies at 515 to 518 (PPPY). Positions 543 to 592 (SLRAGPNEPEGGDKSRKSAKGDKGGKDKKQIQTSPVPVRKNSRDEEKRES) are disordered. Residues 553–572 (GGDKSRKSAKGDKGGKDKKQ) are compositionally biased toward basic and acidic residues. Position 576 is a phosphoserine (Ser-576). A compositionally biased stretch (basic and acidic residues) spans 583–592 (NSRDEEKRES). The 306-residue stretch at 668 to 973 (FVKIKTLGIG…ADDLKAHPFF (306 aa)) folds into the Protein kinase domain. ATP is bound by residues 674 to 682 (LGIGAFGEV) and Lys-697. Asp-791 functions as the Proton acceptor in the catalytic mechanism. In terms of domain architecture, AGC-kinase C-terminal spans 974–1052 (SAIDFSSDIR…RRFFDDNGYP (79 aa)). A disordered region spans residues 994–1022 (SHPMDTSNFDPVDEESPWNDASEGSTKAW). Thr-1041 carries the post-translational modification Phosphothreonine. Residues 1056–1088 (PKPSGAEASQAESSDLESSDLVDQTEGCQPVYV) are disordered.

This sequence belongs to the protein kinase superfamily. AGC Ser/Thr protein kinase family. In terms of assembly, interacts with and is phosphorylated by AURKA. Binds to AR. Interacts with AJUBA during mitosis and this complex regulates organization of the spindle apparatus through recruitment of gamma-tubulin to the centrosome. Interacts (via PPxY motif) with YAP1 (via WW domains). Interacts with MOB1A and MOB1B. Interacts with LIMD1, WTIP and AJUBA. Interacts with SNAI1. Interacts with WWC1, WWC2 and WWC3 (via their WW domains). Interacts (via UBA domain) with ubiquitinated AMOTL2; the interaction promotes LATS2 phosphorylation of YAP1. It depends on Mg(2+) as a cofactor. Post-translationally, autophosphorylated and phosphorylated during M-phase and the G1/S-phase of the cell cycle. Phosphorylated and activated by STK3/MST2. Phosphorylated by MAP4Ks; in parallel to STK3/MST2 and resulting to its activation. Phosphorylation by NUAK2 may regulate its activity in phosphorylation and inactivation YAP1. Expressed at high levels in heart and skeletal muscle and at lower levels in all other tissues examined.

Its subcellular location is the cytoplasm. It is found in the cytoskeleton. It localises to the microtubule organizing center. The protein resides in the centrosome. The protein localises to the spindle pole. Its subcellular location is the nucleus. It carries out the reaction L-seryl-[protein] + ATP = O-phospho-L-seryl-[protein] + ADP + H(+). It catalyses the reaction L-threonyl-[protein] + ATP = O-phospho-L-threonyl-[protein] + ADP + H(+). Negative regulator of YAP1 in the Hippo signaling pathway that plays a pivotal role in organ size control and tumor suppression by restricting proliferation and promoting apoptosis. The core of this pathway is composed of a kinase cascade wherein STK3/MST2 and STK4/MST1, in complex with its regulatory protein SAV1, phosphorylates and activates LATS1/2 in complex with its regulatory protein MOB1, which in turn phosphorylates and inactivates YAP1 oncoprotein and WWTR1/TAZ. Phosphorylation of YAP1 by LATS2 inhibits its translocation into the nucleus to regulate cellular genes important for cell proliferation, cell death, and cell migration. Also phosphorylates YAP1 in response to cell contact inhibition-driven WWP1 ubiquitination of AMOTL2, which results in LATS2 activation. Acts as a tumor suppressor which plays a critical role in centrosome duplication, maintenance of mitotic fidelity and genomic stability. Negatively regulates G1/S transition by down-regulating cyclin E/CDK2 kinase activity. Negative regulator of the androgen receptor. Phosphorylates SNAI1 in the nucleus leading to its nuclear retention and stabilization, which enhances its epithelial-mesenchymal transition and tumor cell invasion/migration activities. This tumor-promoting activity is independent of its effects upon YAP1 or WWTR1/TAZ. Acts as an activator of the NLRP3 inflammasome by mediating phosphorylation of 'Ser-265' of NLRP3 following NLRP3 palmitoylation, promoting NLRP3 activation by NEK7. The chain is Serine/threonine-protein kinase LATS2 from Homo sapiens (Human).